The sequence spans 549 residues: Lipase 5 (549 aa).

Residues 1 to 15 (MKLALALSLIASVAA) form the signal peptide. A disulfide bond links C75 and C112. The active-site Acyl-ester intermediate is S224. Cysteines 283 and 292 form a disulfide. An N-linked (GlcNAc...) asparagine glycan is attached at N329. Residue E356 is the Charge relay system of the active site. N-linked (GlcNAc...) asparagine glycosylation occurs at N366. H464 functions as the Charge relay system in the catalytic mechanism.

It belongs to the type-B carboxylesterase/lipase family.

The enzyme catalyses a triacylglycerol + H2O = a diacylglycerol + a fatty acid + H(+). The chain is Lipase 5 (LIP5) from Diutina rugosa (Yeast).